The following is a 237-amino-acid chain: UDP-Gal:alpha-D-GlcNAc-diphosphoundecaprenol beta-1,4-galactosyltransferase (237 aa).

Glu101 acts as the Nucleophile in catalysis.

The protein belongs to the glycosyltransferase 26 family. It depends on Mn(2+) as a cofactor. Ni(2+) is required as a cofactor. Pb(2+) serves as cofactor.

The enzyme catalyses N-acetyl-alpha-D-glucosaminyl-di-trans,octa-cis-undecaprenyl diphosphate + UDP-alpha-D-galactose = beta-D-Gal-(1-&gt;4)-alpha-D-GlcNAc-di-trans,octa-cis-undecaprenyl diphosphate + UDP + H(+). It participates in bacterial outer membrane biogenesis; LPS O-antigen biosynthesis. Functionally, galactosyltransferase that adds one galactose residue in the beta-1-4 linkage to GlcNAc-alpha-pyrophosphate-lipid in the biosynthesis of the O-polysaccharide repeating unit of the O antigen. This chain is UDP-Gal:alpha-D-GlcNAc-diphosphoundecaprenol beta-1,4-galactosyltransferase (wfeD), found in Shigella boydii.